A 199-amino-acid polypeptide reads, in one-letter code: Sulfocyanin (199 aa).

Residues 7 to 27 (VLPVVVGILVVIIAVAVGVYV) form a helical; Signal-anchor for type II membrane protein membrane-spanning segment. The Plastocyanin-like domain occupies 79-188 (NFNGTSSGSL…SGMWAVLVAS (110 aa)). Cu cation is bound by residues histidine 110, cysteine 171, histidine 176, and methionine 181.

The protein belongs to the multicopper oxidase family.

It is found in the cell membrane. Functionally, the 4 redox proteins SoxE, SoxF, SoxG and SoxH probably form part of a membrane respiratory complex together with SoxM, a catalytic subunit of cytochrome oxidase. This is Sulfocyanin (soxE) from Sulfolobus acidocaldarius (strain ATCC 33909 / DSM 639 / JCM 8929 / NBRC 15157 / NCIMB 11770).